A 365-amino-acid chain; its full sequence is MVANTTGEIFKVTTFGLSHGKALGATIDGCPAGLNLSNEDIQNELNKRRPGTSNLTTSRDEKDKVEILSGIFNGMTDGTPITAIIFNKDQRSKNYDNLKNNPRPGHGDFCWREKFGNYDYRGGGRGSGRVTIGHVIGGAVSKKLLQQHNITTTAHVTSIHNIHSTKKFTLNTIKENITKNNVRCADLEVATLMEDEILKLKERGDSTGGKVEIIIDNVPVGLGQPVFDKIDGDFAKALMNIGAVKAVEVGCGIESSTLTGHEMNDEYYIEDNKIQTKTNNAGGIVGGMTNGMPIILKISVKPTPSVSGIQNTVNLEKRENSTIEIEGRHDPCICPRITTVAEAVCNMVLADHMIRAGYIHPDKIN.

Arg48 provides a ligand contact to NADP(+). FMN-binding positions include 125-127 (RGS), Gly286, 301-305 (KPTPS), and Arg328.

It belongs to the chorismate synthase family. It depends on FMNH2 as a cofactor.

The enzyme catalyses 5-O-(1-carboxyvinyl)-3-phosphoshikimate = chorismate + phosphate. Its pathway is metabolic intermediate biosynthesis; chorismate biosynthesis; chorismate from D-erythrose 4-phosphate and phosphoenolpyruvate: step 7/7. Functionally, catalyzes the anti-1,4-elimination of the C-3 phosphate and the C-6 proR hydrogen from 5-enolpyruvylshikimate-3-phosphate (EPSP) to yield chorismate, which is the branch point compound that serves as the starting substrate for the three terminal pathways of aromatic amino acid biosynthesis. This reaction introduces a second double bond into the aromatic ring system. In Methanosphaera stadtmanae (strain ATCC 43021 / DSM 3091 / JCM 11832 / MCB-3), this protein is Chorismate synthase.